Reading from the N-terminus, the 84-residue chain is MNEKKNLLNGYIVSNKMNKSAVVIVERKIKHSIYKKFIKKRTKLCIHDEKNICNIGDIVTIRECRPISKTKSWILVNILEKSIV.

It belongs to the universal ribosomal protein uS17 family. As to quaternary structure, part of the 30S ribosomal subunit.

Functionally, one of the primary rRNA binding proteins, it binds specifically to the 5'-end of 16S ribosomal RNA. The sequence is that of Small ribosomal subunit protein uS17 from Buchnera aphidicola subsp. Cinara cedri (strain Cc).